Consider the following 846-residue polypeptide: Cap-specific mRNA (nucleoside-2'-O-)-methyltransferase 1 (846 aa).

The interval methionine 1–serine 81 is disordered. The Bipartite nuclear localization signal motif lies at lysine 2–arginine 20. Residues asparagine 27 to glutamate 45 are compositionally biased toward polar residues. The 47-residue stretch at tyrosine 87–lysine 133 folds into the G-patch domain. Substrate-binding positions include lysine 203–aspartate 207 and arginine 218. Positions phenylalanine 231 to lysine 450 constitute a RrmJ-type SAM-dependent 2'-O-MTase domain. Asparagine 234 is a binding site for S-adenosyl-L-methionine. Lysine 239 is an active-site residue. Residues cysteine 277–phenylalanine 283 and aspartate 335–valine 336 each bind S-adenosyl-L-methionine. The active site involves aspartate 364. Asparagine 374–glutamine 376 serves as a coordination point for substrate. Residue lysine 404 is the Proton acceptor of the active site. Position 439 (asparagine 439) interacts with substrate. Positions lysine 752–glutamate 786 constitute a WW domain.

Its subcellular location is the nucleus. It catalyses the reaction a 5'-end (N(7)-methyl 5'-triphosphoguanosine)-ribonucleoside in mRNA + S-adenosyl-L-methionine = a 5'-end (N(7)-methyl 5'-triphosphoguanosine)-(2'-O-methyl-ribonucleoside) in mRNA + S-adenosyl-L-homocysteine + H(+). In terms of biological role, S-adenosyl-L-methionine-dependent methyltransferase that mediates mRNA cap1 2'-O-ribose methylation to the 5'-cap structure of mRNAs. Methylates the ribose of the first nucleotide of a m(7)GpppG-capped mRNA and small nuclear RNA (snRNA) to produce m(7)GpppRm (cap1). Displays a preference for cap0 transcripts. Cap1 modification is linked to higher levels of translation. May be involved in the interferon response pathway. The chain is Cap-specific mRNA (nucleoside-2'-O-)-methyltransferase 1 (cmtr1) from Xenopus laevis (African clawed frog).